The following is a 291-amino-acid chain: Phosphoribosylaminoimidazole-succinocarboxamide synthase (291 aa).

It belongs to the SAICAR synthetase family.

The catalysed reaction is 5-amino-1-(5-phospho-D-ribosyl)imidazole-4-carboxylate + L-aspartate + ATP = (2S)-2-[5-amino-1-(5-phospho-beta-D-ribosyl)imidazole-4-carboxamido]succinate + ADP + phosphate + 2 H(+). It participates in purine metabolism; IMP biosynthesis via de novo pathway; 5-amino-1-(5-phospho-D-ribosyl)imidazole-4-carboxamide from 5-amino-1-(5-phospho-D-ribosyl)imidazole-4-carboxylate: step 1/2. In Candida albicans (Yeast), this protein is Phosphoribosylaminoimidazole-succinocarboxamide synthase (ADE1).